Consider the following 711-residue polypeptide: MLNPIVRKFQYGQHTVTLETGMMARQATAAVMVSMDDTAVFVTVVGQKKAKPGQDFFPLTVNYQERTYAAGRIPGSFFRREGRPSEGETLIARLIDRPVRPLFPEGFVNEVQVIATVVSVNPQVNPDIVAMIGASAALSLSGIPFNGPIGAARVGYINDQYVLNPTQDELKESKLDLVVAGTEAAVLMVESEAELLSEDTMLGAVVFGHEQQQVVIQAINDLVKEAGKPRWDWQPEAVNDALNARVAALAESRLSDAYRITDKQERYAQVDVIKSETIEQLIAEDETLDANELGEILHAIEKNVVRSRVLAGEPRIDGREKDMIRGLDVRTGVLPRTHGSALFTRGETQALVTATLGTARDAQVLDELMGERTDSFLFHYNFPPYSVGETGMVGSPKRREIGHGRLAKRGVLAVMPDMDKFPYTVRVVSEITESNGSSSMASVCGASLALMDAGVPIKAAVAGIAMGLVKEGDNYVVLSDILGDEDHLGDMDFKVAGSRDGISALQMDIKIEGITKEIMQVALNQAKGARLHILGVMEQAINAPRGDISEFAPRIHTIKISTDKIKDVIGKGGSVIRALTEETGTTIEIEDDGTVKIAATDGEKAKYAIRRIEEITAEIEVGRIYNGKVTRIVDFGAFVAIGGGKEGLVHISQIADKRVEKVTDYLQMGQEVPVKVLEVDRQGRVRLSIKEATEQSQPAAAPEAPASEQAE.

Asp-486 and Asp-492 together coordinate Mg(2+). Residues 553-612 form the KH domain; that stretch reads PRIHTIKISTDKIKDVIGKGGSVIRALTEETGTTIEIEDDGTVKIAATDGEKAKYAIRRI. Residues 622–690 form the S1 motif domain; the sequence is GRIYNGKVTR…RQGRVRLSIK (69 aa). The segment at 690-711 is disordered; it reads KEATEQSQPAAAPEAPASEQAE. Over residues 694-711 the composition is skewed to low complexity; that stretch reads EQSQPAAAPEAPASEQAE.

This sequence belongs to the polyribonucleotide nucleotidyltransferase family. In terms of assembly, component of the RNA degradosome, which is a multiprotein complex involved in RNA processing and mRNA degradation. It depends on Mg(2+) as a cofactor.

It localises to the cytoplasm. It carries out the reaction RNA(n+1) + phosphate = RNA(n) + a ribonucleoside 5'-diphosphate. Involved in mRNA degradation. Catalyzes the phosphorolysis of single-stranded polyribonucleotides processively in the 3'- to 5'-direction. The chain is Polyribonucleotide nucleotidyltransferase from Salmonella choleraesuis (strain SC-B67).